Here is a 199-residue protein sequence, read N- to C-terminus: Recombination protein RecR (199 aa).

Residues Cys-58–Cys-73 form a C4-type zinc finger. The region spanning Ser-81–Pro-176 is the Toprim domain.

This sequence belongs to the RecR family.

May play a role in DNA repair. It seems to be involved in an RecBC-independent recombinational process of DNA repair. It may act with RecF and RecO. The polypeptide is Recombination protein RecR (Caldanaerobacter subterraneus subsp. tengcongensis (strain DSM 15242 / JCM 11007 / NBRC 100824 / MB4) (Thermoanaerobacter tengcongensis)).